A 358-amino-acid polypeptide reads, in one-letter code: NADH-quinone oxidoreductase subunit H (358 aa).

8 consecutive transmembrane segments (helical) span residues 30–50, 96–116, 129–149, 168–188, 201–221, 265–285, 297–317, and 336–356; these read VVIG…LIYM, FLYN…FSCL, VGVF…LLAG, IISY…LMGT, GWFI…YLIA, FIVA…LHIV, IPGF…LMWI, and YLVP…VFGL.

This sequence belongs to the complex I subunit 1 family. As to quaternary structure, NDH-1 is composed of 14 different subunits. Subunits NuoA, H, J, K, L, M, N constitute the membrane sector of the complex.

It localises to the cell inner membrane. The catalysed reaction is a quinone + NADH + 5 H(+)(in) = a quinol + NAD(+) + 4 H(+)(out). In terms of biological role, NDH-1 shuttles electrons from NADH, via FMN and iron-sulfur (Fe-S) centers, to quinones in the respiratory chain. The immediate electron acceptor for the enzyme in this species is believed to be ubiquinone. Couples the redox reaction to proton translocation (for every two electrons transferred, four hydrogen ions are translocated across the cytoplasmic membrane), and thus conserves the redox energy in a proton gradient. This subunit may bind ubiquinone. The protein is NADH-quinone oxidoreductase subunit H of Bacteroides fragilis (strain ATCC 25285 / DSM 2151 / CCUG 4856 / JCM 11019 / LMG 10263 / NCTC 9343 / Onslow / VPI 2553 / EN-2).